The chain runs to 268 residues: MALNFPNIDPVIVKFGPFDIFGQTFEPALRWYGFTYLVGFVAAMWLLNRQADRSNGLWSREQVSDLLFYGFLGVILGGRIGYVLFYHFDYFLASPMYLFKISEGGMSFHGGLMGVITAMIYIAWKQKRTFFAVADMVAPVVPIGLGAGRIGNFINGELWGRVTDVPWAMVFPSGGPEPRHPSQLYQFALEGVALFLLLYWFSKRTKKVGAVSGMFLLGYGIFRVIVETVRQPDAQLGLYWGFMTMGQILSVPMILFGLYLILRPEGKQ.

A run of 7 helical transmembrane segments spans residues 27–47 (PALR…MWLL), 66–86 (LLFY…VLFY), 104–124 (GGMS…YIAW), 130–150 (FFAV…AGRI), 181–201 (PSQL…LYWF), 208–228 (VGAV…IVET), and 242–262 (FMTM…YLIL). Arg149 is an a 1,2-diacyl-sn-glycero-3-phospho-(1'-sn-glycerol) binding site.

It belongs to the Lgt family.

The protein resides in the cell inner membrane. It carries out the reaction L-cysteinyl-[prolipoprotein] + a 1,2-diacyl-sn-glycero-3-phospho-(1'-sn-glycerol) = an S-1,2-diacyl-sn-glyceryl-L-cysteinyl-[prolipoprotein] + sn-glycerol 1-phosphate + H(+). It functions in the pathway protein modification; lipoprotein biosynthesis (diacylglyceryl transfer). In terms of biological role, catalyzes the transfer of the diacylglyceryl group from phosphatidylglycerol to the sulfhydryl group of the N-terminal cysteine of a prolipoprotein, the first step in the formation of mature lipoproteins. This Shewanella sp. (strain ANA-3) protein is Phosphatidylglycerol--prolipoprotein diacylglyceryl transferase.